Here is a 444-residue protein sequence, read N- to C-terminus: Zinc finger protein ZIC 1 (444 aa).

The C2H2-type 1 zinc finger occupies 222 to 257; that stretch reads LICKWIEPEQLANPKKSCNKTFSTMHELVTHVTVEH. A C2H2-type 2; degenerate zinc finger spans residues 271–293; the sequence is EECPREGKPFKAKYKLVNHIRVH. 3 C2H2-type zinc fingers span residues 299–323, 329–353, and 359–381; these read FPCPFPGCGKVFARSENLKIHKRTH, FKCEFEGCDRRFANSSDRKKHMHVH, and YLCKMCDKSYTHPSSLRKHMKVH. Residues 372–432 are disordered; that stretch reads SSLRKHMKVH…SSAGHHTASH (61 aa). Low complexity predominate over residues 383-432; sequence SSSQGSQPSPAASSGYESSTPPTIVSPSTENQTASSLSPSSSAGHHTASH.

Belongs to the GLI C2H2-type zinc-finger protein family.

The protein localises to the nucleus. It is found in the cytoplasm. In terms of biological role, acts as a transcriptional activator. Involved in neurogenesis. Plays important roles in the early stage of organogenesis of the CNS, as well as during dorsal spinal cord development and maturation of the cerebellum. Binds to the minimal GLI-consensus sequence 5'-TGGGTGGTC-3'. In Gallus gallus (Chicken), this protein is Zinc finger protein ZIC 1 (ZIC1).